A 208-amino-acid polypeptide reads, in one-letter code: Uracil phosphoribosyltransferase (208 aa).

Residues arginine 78, arginine 103, and 130-138 contribute to the 5-phospho-alpha-D-ribose 1-diphosphate site; that span reads DPMLATGGS. Uracil is bound by residues isoleucine 193 and 198 to 200; that span reads GDA. Aspartate 199 provides a ligand contact to 5-phospho-alpha-D-ribose 1-diphosphate.

Belongs to the UPRTase family. It depends on Mg(2+) as a cofactor.

The enzyme catalyses UMP + diphosphate = 5-phospho-alpha-D-ribose 1-diphosphate + uracil. Its pathway is pyrimidine metabolism; UMP biosynthesis via salvage pathway; UMP from uracil: step 1/1. Allosterically activated by GTP. Functionally, catalyzes the conversion of uracil and 5-phospho-alpha-D-ribose 1-diphosphate (PRPP) to UMP and diphosphate. The sequence is that of Uracil phosphoribosyltransferase from Colwellia psychrerythraea (strain 34H / ATCC BAA-681) (Vibrio psychroerythus).